We begin with the raw amino-acid sequence, 388 residues long: MKWMVVVLVCLQLLEAAVVKVPLKKFKSIRETMKEKGLLGEFLRTHKYDPAWKYRFGDLSVTYEPMAYMDAAYFGEISIGTPPQNFLVLFDTGSSNLWVPSVYCQSQACTSHSRFNPSESSTYSTNGQTFSLQYGSGSLTGFFGYDTLTVQSIQVPNQEFGLSENEPGTNFVYAQFDGIMGLAYPALSVDEATTAMQGMVQEGALTSPVFSVYLSNQQGSSGGAVVFGGVDSSLYTGQIYWAPVTQELYWQIGIEEFLIGGQASGWCSEGCQAIVDTGTSLLTVPQQYMSALLQATGAQEDEYGQFLVNCNSIQNLPSLTFIINGVEFPLPPSSYILSNNGYCTVGVEPTYLSSQNGQPLWILGDVFLRSYYSVYDLGNNRVGFATAA.

The first 16 residues, 1–16 (MKWMVVVLVCLQLLEA), serve as a signal peptide directing secretion. Positions 17–59 (AVVKVPLKKFKSIRETMKEKGLLGEFLRTHKYDPAWKYRFGDL) are cleaved as a propeptide — activation peptide. One can recognise a Peptidase A1 domain in the interval 73–385 (YFGEISIGTP…DLGNNRVGFA (313 aa)). Aspartate 91 is a catalytic residue. 2 disulfides stabilise this stretch: cysteine 104-cysteine 109 and cysteine 267-cysteine 271. Aspartate 276 is a catalytic residue. A disulfide bridge links cysteine 310 with cysteine 343.

Belongs to the peptidase A1 family.

It is found in the secreted. It carries out the reaction More restricted specificity than pepsin A, but shows preferential cleavage at Tyr-|-Xaa bonds. High activity on hemoglobin.. Its function is as follows. Hydrolyzes a variety of proteins. In Homo sapiens (Human), this protein is Gastricsin (PGC).